We begin with the raw amino-acid sequence, 602 residues long: Elongation factor 4 (602 aa).

Positions 2–184 constitute a tr-type G domain; the sequence is NHIRNFSIIA…AVVAKVPPPK (183 aa). GTP-binding positions include 14–19 and 131–134; these read DHGKST and NKMD.

The protein belongs to the TRAFAC class translation factor GTPase superfamily. Classic translation factor GTPase family. LepA subfamily.

The protein resides in the cell inner membrane. It catalyses the reaction GTP + H2O = GDP + phosphate + H(+). Its function is as follows. Required for accurate and efficient protein synthesis under certain stress conditions. May act as a fidelity factor of the translation reaction, by catalyzing a one-codon backward translocation of tRNAs on improperly translocated ribosomes. Back-translocation proceeds from a post-translocation (POST) complex to a pre-translocation (PRE) complex, thus giving elongation factor G a second chance to translocate the tRNAs correctly. Binds to ribosomes in a GTP-dependent manner. This is Elongation factor 4 from Delftia acidovorans (strain DSM 14801 / SPH-1).